A 332-amino-acid chain; its full sequence is Glycerol-3-phosphate dehydrogenase [NAD(P)+] (332 aa).

Positions 13, 34, and 108 each coordinate NADPH. Sn-glycerol 3-phosphate is bound by residues Lys-108, Gly-136, and Ser-138. Ala-140 provides a ligand contact to NADPH. The sn-glycerol 3-phosphate site is built by Lys-191, Asp-244, Ser-254, Arg-255, and Asn-256. Lys-191 functions as the Proton acceptor in the catalytic mechanism. Arg-255 contacts NADPH. 2 residues coordinate NADPH: Val-279 and Glu-281.

Belongs to the NAD-dependent glycerol-3-phosphate dehydrogenase family.

It localises to the cytoplasm. It catalyses the reaction sn-glycerol 3-phosphate + NAD(+) = dihydroxyacetone phosphate + NADH + H(+). The enzyme catalyses sn-glycerol 3-phosphate + NADP(+) = dihydroxyacetone phosphate + NADPH + H(+). The protein operates within membrane lipid metabolism; glycerophospholipid metabolism. Its function is as follows. Catalyzes the reduction of the glycolytic intermediate dihydroxyacetone phosphate (DHAP) to sn-glycerol 3-phosphate (G3P), the key precursor for phospholipid synthesis. This chain is Glycerol-3-phosphate dehydrogenase [NAD(P)+], found in Francisella tularensis subsp. novicida (strain U112).